The sequence spans 261 residues: MWFLILFLALSLGRNDAAPPVQSRVVGGYNCEMNSQPWQVAVYYFGEYLCGGVLIDPSWVITAAHCATDNYQVWLGRNNLYEDEPFAQHRLVSQSFPHPGFNQDLIWNHTRQPGDDYSNDLMLLHLSQPADITDGVKVIDLPIEEPKVGSTCLASGWGSITPDGLELSDDLQCVNIDLLSNEKCVEAHKEEVTDLMLCAGEMDGGKDTCKGDSGGPLICNGVLQGITSWGFNPCGEPKKPGIYTKLIKFTPWIKEVMKENP.

The N-terminal stretch at 1–18 (MWFLILFLALSLGRNDAA) is a signal peptide. Residues 19-24 (PPVQSR) constitute a propeptide, activation peptide. The region spanning 25–258 (VVGGYNCEMN…FTPWIKEVMK (234 aa)) is the Peptidase S1 domain. Disulfide bonds link Cys31/Cys173, Cys50/Cys66, Cys152/Cys219, Cys184/Cys198, and Cys209/Cys234. His65 acts as the Charge relay system in catalysis. Asn108 carries an N-linked (GlcNAc...) asparagine glycan. Asp120 acts as the Charge relay system in catalysis. Ser213 functions as the Charge relay system in the catalytic mechanism.

The protein belongs to the peptidase S1 family. Kallikrein subfamily. In terms of tissue distribution, high levels in pancreas, submaxillary and parotid glands, spleen, and kidney.

It catalyses the reaction Preferential cleavage of Arg-|-Xaa bonds in small molecule substrates. Highly selective action to release kallidin (lysyl-bradykinin) from kininogen involves hydrolysis of Met-|-Xaa or Leu-|-Xaa.. The chain is Kallikrein-1 (Ngfg) from Rattus norvegicus (Rat).